The sequence spans 62 residues: Conotoxin TeAr151 (62 aa).

Positions 1-22 (MRCLPVFVVLLLLIASAPSVDA) are cleaved as a signal peptide. Residues 23–47 (QPKTKDDVPLAPLHDNIQNTLQTLR) constitute a propeptide that is removed on maturation. Methionine 55 is subject to Methionine sulfoxide; partial. Serine amide is present on serine 60.

It belongs to the conotoxin T superfamily. Contains 2 disulfide bonds. In terms of processing, contains 2 disulfide bonds that can be either 'C1-C3, C2-C4' or 'C1-C4, C2-C3', since these disulfide connectivities have been observed for conotoxins with cysteine framework V (for examples, see AC P0DQQ7 and AC P81755).. As to expression, expressed by the venom duct. Is mostly present in part 5 of the venom duct (distal part near the pharynx), and less abundantly present in part 4 of the venom duct.

The protein localises to the secreted. The polypeptide is Conotoxin TeAr151 (Conus textile (Cloth-of-gold cone)).